We begin with the raw amino-acid sequence, 279 residues long: Putative pyruvate, phosphate dikinase regulatory protein (279 aa).

153–160 provides a ligand contact to ADP; the sequence is GVSRTSKT.

It belongs to the pyruvate, phosphate/water dikinase regulatory protein family. PDRP subfamily.

It carries out the reaction N(tele)-phospho-L-histidyl/L-threonyl-[pyruvate, phosphate dikinase] + ADP = N(tele)-phospho-L-histidyl/O-phospho-L-threonyl-[pyruvate, phosphate dikinase] + AMP + H(+). The enzyme catalyses N(tele)-phospho-L-histidyl/O-phospho-L-threonyl-[pyruvate, phosphate dikinase] + phosphate + H(+) = N(tele)-phospho-L-histidyl/L-threonyl-[pyruvate, phosphate dikinase] + diphosphate. Functionally, bifunctional serine/threonine kinase and phosphorylase involved in the regulation of the pyruvate, phosphate dikinase (PPDK) by catalyzing its phosphorylation/dephosphorylation. In Rhodopseudomonas palustris (strain BisA53), this protein is Putative pyruvate, phosphate dikinase regulatory protein.